Consider the following 302-residue polypeptide: tRNA dimethylallyltransferase 2 (302 aa).

6-13 (GPTACGKT) is an ATP binding site. 8–13 (TACGKT) is a binding site for substrate. Interaction with substrate tRNA stretches follow at residues 31–34 (DSRQ) and 154–158 (QRAIR).

Belongs to the IPP transferase family. Monomer. Mg(2+) serves as cofactor.

It carries out the reaction adenosine(37) in tRNA + dimethylallyl diphosphate = N(6)-dimethylallyladenosine(37) in tRNA + diphosphate. Its function is as follows. Catalyzes the transfer of a dimethylallyl group onto the adenine at position 37 in tRNAs that read codons beginning with uridine, leading to the formation of N6-(dimethylallyl)adenosine (i(6)A). The protein is tRNA dimethylallyltransferase 2 of Porphyromonas gingivalis (strain ATCC BAA-308 / W83).